The chain runs to 230 residues: Ureidoacrylate amidohydrolase RutB (230 aa).

Residue Asp24 is the Proton acceptor of the active site. Lys133 is a catalytic residue. Cys166 (nucleophile) is an active-site residue.

Belongs to the isochorismatase family. RutB subfamily.

It carries out the reaction (Z)-3-ureidoacrylate + H2O + H(+) = (Z)-3-aminoacrylate + NH4(+) + CO2. The catalysed reaction is (Z)-3-ureidoacrylate + H2O = (Z)-3-aminoacrylate + carbamate + H(+). It catalyses the reaction (Z)-2-methylureidoacrylate + H2O + H(+) = (Z)-2-methylaminoacrylate + NH4(+) + CO2. Functionally, hydrolyzes ureidoacrylate to form aminoacrylate and carbamate. The carbamate hydrolyzes spontaneously, thereby releasing one of the nitrogen atoms of the pyrimidine ring as ammonia and one of its carbon atoms as CO2. In Escherichia coli (strain K12 / MC4100 / BW2952), this protein is Ureidoacrylate amidohydrolase RutB.